The following is a 122-amino-acid chain: Large ribosomal subunit protein uL14c (122 aa).

This sequence belongs to the universal ribosomal protein uL14 family. In terms of assembly, part of the 50S ribosomal subunit.

The protein resides in the plastid. The protein localises to the chloroplast. In terms of biological role, binds to 23S rRNA. The sequence is that of Large ribosomal subunit protein uL14c from Lotus japonicus (Lotus corniculatus var. japonicus).